The primary structure comprises 489 residues: MVTTPSFKPTYEQNTFKLSPTATTTTLPWNNTSLPTTPLFGTDGIRGKAGELLTAPMALQIGFWAGQVLPQYCQNPGPIIMGQDTRNSGNMLAMALSAGLTAAGLEVWNLGLCPTPCVAYITSISEAIGGVMISASHNPPEDNGIKFFGSDGTKLSSELQQKIESGIRGTANFPTNHSNWGQHYHRPELVKEYQASLHSPLTPGSLQGMKIVLDLAWGAAVHTAPEVFRGMGAEIICLHDQPNGDRINVNCGSTHLSHLQQAVIEHNANLGFAFDGDADRVLAIDSQGRSIDGDYILYFWGQSLSKARLLPNNLIVTTVMANLGFEHAWNKQGGKILRTKVGDQYVHAEMQRTGSMLGGEQSGHVLCPHYGITGDGLMTALHLATLVKNSGISLAELVDQSFKTYPQLLRNVRVEDRDRRANWKNCEPLVKTIEEAETALADLGRVLVRASGTEPVIRVMVEAINLELAKSWTENIVLAVQQHLLPTKD.

Ser-136 acts as the Phosphoserine intermediate in catalysis. Residues Ser-136, Asp-275, Asp-277, and Asp-279 each coordinate Mg(2+). Phosphoserine is present on Ser-136.

Belongs to the phosphohexose mutase family. Mg(2+) is required as a cofactor. Post-translationally, activated by phosphorylation.

The enzyme catalyses alpha-D-glucosamine 1-phosphate = D-glucosamine 6-phosphate. Catalyzes the conversion of glucosamine-6-phosphate to glucosamine-1-phosphate. The chain is Phosphoglucosamine mutase from Trichodesmium erythraeum (strain IMS101).